Reading from the N-terminus, the 310-residue chain is Glutarate 2-hydroxylase (310 aa).

The Fe cation site is built by His-160, Asp-162, and His-277.

This sequence belongs to the glutarate hydroxylase family. Homotetramer. The cofactor is Fe(2+).

It catalyses the reaction glutarate + 2-oxoglutarate + O2 = (S)-2-hydroxyglutarate + succinate + CO2. It participates in amino-acid degradation. Acts as an alpha-ketoglutarate-dependent dioxygenase catalyzing hydroxylation of glutarate (GA) to L-2-hydroxyglutarate (L2HG). Functions in a L-lysine degradation pathway that proceeds via cadaverine, glutarate and L-2-hydroxyglutarate. The polypeptide is Glutarate 2-hydroxylase (Shigella flexneri).